Consider the following 556-residue polypeptide: Polypyrimidine tract-binding protein 1 (556 aa).

The residue at position 1 (Met-1) is an N-acetylmethionine. Position 16 is a phosphoserine (Ser-16). The tract at residues Ala-35–Gly-54 is disordered. RRM domains are found at residues Arg-58–Asn-142, Leu-183–Leu-259, and Ser-362–His-436. Lys-64 participates in a covalent cross-link: Glycyl lysine isopeptide (Lys-Gly) (interchain with G-Cter in SUMO2). Tyr-126 bears the Phosphotyrosine mark. Thr-137 bears the Phosphothreonine mark. Residue Ser-140 is modified to Phosphoserine. A Glycyl lysine isopeptide (Lys-Gly) (interchain with G-Cter in SUMO2) cross-link involves residue Lys-217. The segment at His-436 to Ser-458 is disordered. Ser-458 is subject to Phosphoserine. In terms of domain architecture, RRM 4 spans Ala-479–Ser-554.

In terms of assembly, monomer. Part of a ternary complex containing KHSRP, PTBP1, PTBP2 and HNRPH1. Interacts with RAVER1 and SFPQ.

It is found in the nucleus. In terms of biological role, plays a role in pre-mRNA splicing and in the regulation of alternative splicing events. Activates exon skipping of its own pre-mRNA during muscle cell differentiation. Binds to the polypyrimidine tract of introns. May promote RNA looping when bound to two separate polypyrimidine tracts in the same pre-mRNA. May promote the binding of U2 snRNP to pre-mRNA. Cooperates with RAVER1 to modulate switching between mutually exclusive exons during maturation of the TPM1 pre-mRNA. Represses the splicing of MAPT/Tau exon 10. Binds to polypyrimidine-rich controlling element (PCE) of CFTR and promotes exon skipping of CFTR exon 9, thereby antagonizing TIA1 and its role in exon inclusion of CFTR exon 9. Plays a role in the splicing of pyruvate kinase PKM by binding repressively to a polypyrimidine tract flanking PKM exon 9, inhibiting exon 9 inclusion and resulting in exon 10 inclusion and production of the PKM M2 isoform. This Rattus norvegicus (Rat) protein is Polypyrimidine tract-binding protein 1 (Ptbp1).